Reading from the N-terminus, the 215-residue chain is Ribosomal RNA small subunit methyltransferase G (215 aa).

Residues Gly-82, Met-87, Val-133 to Glu-134, and Arg-148 contribute to the S-adenosyl-L-methionine site.

Belongs to the methyltransferase superfamily. RNA methyltransferase RsmG family.

The protein localises to the cytoplasm. It catalyses the reaction guanosine(527) in 16S rRNA + S-adenosyl-L-methionine = N(7)-methylguanosine(527) in 16S rRNA + S-adenosyl-L-homocysteine. Specifically methylates the N7 position of guanine in position 527 of 16S rRNA. This Stutzerimonas stutzeri (strain A1501) (Pseudomonas stutzeri) protein is Ribosomal RNA small subunit methyltransferase G.